Reading from the N-terminus, the 247-residue chain is 7-carboxy-7-deazaguanine synthase (247 aa).

Residues 15–17 (IQG) and R30 each bind substrate. The Radical SAM core domain maps to 21–247 (LVGRRQIFVR…PQMHRALGLR (227 aa)). [4Fe-4S] cluster-binding residues include C34, C38, and C41. T43 provides a ligand contact to Mg(2+). Position 78 (T78) interacts with substrate. S-adenosyl-L-methionine is bound at residue G80.

The protein belongs to the radical SAM superfamily. 7-carboxy-7-deazaguanine synthase family. Homodimer. [4Fe-4S] cluster serves as cofactor. S-adenosyl-L-methionine is required as a cofactor. It depends on Mg(2+) as a cofactor.

The enzyme catalyses 6-carboxy-5,6,7,8-tetrahydropterin + H(+) = 7-carboxy-7-deazaguanine + NH4(+). It functions in the pathway purine metabolism; 7-cyano-7-deazaguanine biosynthesis. Catalyzes the complex heterocyclic radical-mediated conversion of 6-carboxy-5,6,7,8-tetrahydropterin (CPH4) to 7-carboxy-7-deazaguanine (CDG), a step common to the biosynthetic pathways of all 7-deazapurine-containing compounds. In Methanothermobacter thermautotrophicus (strain ATCC 29096 / DSM 1053 / JCM 10044 / NBRC 100330 / Delta H) (Methanobacterium thermoautotrophicum), this protein is 7-carboxy-7-deazaguanine synthase.